The sequence spans 290 residues: 4-hydroxy-3-methylbut-2-enyl diphosphate reductase (290 aa).

[4Fe-4S] cluster is bound at residue cysteine 12. (2E)-4-hydroxy-3-methylbut-2-enyl diphosphate-binding residues include histidine 50 and histidine 83. Positions 50 and 83 each coordinate dimethylallyl diphosphate. Isopentenyl diphosphate contacts are provided by histidine 50 and histidine 83. Residue cysteine 105 coordinates [4Fe-4S] cluster. Residue histidine 133 coordinates (2E)-4-hydroxy-3-methylbut-2-enyl diphosphate. Dimethylallyl diphosphate is bound at residue histidine 133. Histidine 133 is an isopentenyl diphosphate binding site. Residue glutamate 135 is the Proton donor of the active site. Threonine 173 contacts (2E)-4-hydroxy-3-methylbut-2-enyl diphosphate. Cysteine 202 lines the [4Fe-4S] cluster pocket. The (2E)-4-hydroxy-3-methylbut-2-enyl diphosphate site is built by serine 230, asparagine 232, and serine 274. Residues serine 230, asparagine 232, and serine 274 each coordinate dimethylallyl diphosphate. The isopentenyl diphosphate site is built by serine 230, asparagine 232, and serine 274.

It belongs to the IspH family. [4Fe-4S] cluster serves as cofactor.

It catalyses the reaction isopentenyl diphosphate + 2 oxidized [2Fe-2S]-[ferredoxin] + H2O = (2E)-4-hydroxy-3-methylbut-2-enyl diphosphate + 2 reduced [2Fe-2S]-[ferredoxin] + 2 H(+). The catalysed reaction is dimethylallyl diphosphate + 2 oxidized [2Fe-2S]-[ferredoxin] + H2O = (2E)-4-hydroxy-3-methylbut-2-enyl diphosphate + 2 reduced [2Fe-2S]-[ferredoxin] + 2 H(+). It participates in isoprenoid biosynthesis; dimethylallyl diphosphate biosynthesis; dimethylallyl diphosphate from (2E)-4-hydroxy-3-methylbutenyl diphosphate: step 1/1. The protein operates within isoprenoid biosynthesis; isopentenyl diphosphate biosynthesis via DXP pathway; isopentenyl diphosphate from 1-deoxy-D-xylulose 5-phosphate: step 6/6. Functionally, catalyzes the conversion of 1-hydroxy-2-methyl-2-(E)-butenyl 4-diphosphate (HMBPP) into a mixture of isopentenyl diphosphate (IPP) and dimethylallyl diphosphate (DMAPP). Acts in the terminal step of the DOXP/MEP pathway for isoprenoid precursor biosynthesis. The polypeptide is 4-hydroxy-3-methylbut-2-enyl diphosphate reductase (Nitratidesulfovibrio vulgaris (strain ATCC 29579 / DSM 644 / CCUG 34227 / NCIMB 8303 / VKM B-1760 / Hildenborough) (Desulfovibrio vulgaris)).